The sequence spans 152 residues: Mitochondrial holo-[acyl-carrier-protein] synthase (152 aa).

It belongs to the P-Pant transferase superfamily. AcpS family.

The protein localises to the mitochondrion. The catalysed reaction is apo-[ACP] + CoA = holo-[ACP] + adenosine 3',5'-bisphosphate + H(+). Functionally, transfers the 4'-phosphopantetheine moiety from coenzyme A to a Ser of mitochondrial acyl-carrier-protein. The protein is Mitochondrial holo-[acyl-carrier-protein] synthase (PPT2) of Candida glabrata (strain ATCC 2001 / BCRC 20586 / JCM 3761 / NBRC 0622 / NRRL Y-65 / CBS 138) (Yeast).